The following is a 232-amino-acid chain: MTAQKMSAQEIIAFIGNAEKKTNVKVTFEGELATAVPSSVTKLGNVLFGDWKDIEPLLANLTENKDYVVEQDGRNSAVPLLDKRHLNARIEPGAIIRDQVTIEDNAVVMMGAVINIGAEIGAGTMIDMGAILGGRATVGKNSHIGAGAVLAGVIEPASAEPVRIGDNVLVGANAVVIEGVQVGNGSVVAAGAIVTQDVPENVVVAGVPARIIKEIDEKTQQKTALEDALRNL.

Belongs to the transferase hexapeptide repeat family. DapH subfamily.

The enzyme catalyses (S)-2,3,4,5-tetrahydrodipicolinate + acetyl-CoA + H2O = L-2-acetamido-6-oxoheptanedioate + CoA. It functions in the pathway amino-acid biosynthesis; L-lysine biosynthesis via DAP pathway; LL-2,6-diaminopimelate from (S)-tetrahydrodipicolinate (acetylase route): step 1/3. Its function is as follows. Catalyzes the transfer of an acetyl group from acetyl-CoA to tetrahydrodipicolinate. The protein is 2,3,4,5-tetrahydropyridine-2,6-dicarboxylate N-acetyltransferase of Streptococcus thermophilus (strain CNRZ 1066).